A 320-amino-acid chain; its full sequence is Aspartate carbamoyltransferase catalytic subunit (320 aa).

Residues R70 and T71 each contribute to the carbamoyl phosphate site. K98 contributes to the L-aspartate binding site. R120, H150, and Q153 together coordinate carbamoyl phosphate. Positions 184 and 239 each coordinate L-aspartate. Residues G280 and P281 each coordinate carbamoyl phosphate.

The protein belongs to the aspartate/ornithine carbamoyltransferase superfamily. ATCase family. As to quaternary structure, heterododecamer (2C3:3R2) of six catalytic PyrB chains organized as two trimers (C3), and six regulatory PyrI chains organized as three dimers (R2).

The catalysed reaction is carbamoyl phosphate + L-aspartate = N-carbamoyl-L-aspartate + phosphate + H(+). It functions in the pathway pyrimidine metabolism; UMP biosynthesis via de novo pathway; (S)-dihydroorotate from bicarbonate: step 2/3. In terms of biological role, catalyzes the condensation of carbamoyl phosphate and aspartate to form carbamoyl aspartate and inorganic phosphate, the committed step in the de novo pyrimidine nucleotide biosynthesis pathway. The protein is Aspartate carbamoyltransferase catalytic subunit of Xylella fastidiosa (strain Temecula1 / ATCC 700964).